A 232-amino-acid polypeptide reads, in one-letter code: Large ribosomal subunit protein uL1 (232 aa).

The protein belongs to the universal ribosomal protein uL1 family. In terms of assembly, part of the 50S ribosomal subunit.

Functionally, binds directly to 23S rRNA. The L1 stalk is quite mobile in the ribosome, and is involved in E site tRNA release. In terms of biological role, protein L1 is also a translational repressor protein, it controls the translation of the L11 operon by binding to its mRNA. This chain is Large ribosomal subunit protein uL1, found in Bacillus cereus (strain ATCC 14579 / DSM 31 / CCUG 7414 / JCM 2152 / NBRC 15305 / NCIMB 9373 / NCTC 2599 / NRRL B-3711).